Reading from the N-terminus, the 592-residue chain is Arginine--tRNA ligase (592 aa).

The 'HIGH' region signature appears at 134–144 (ANPTGPLHVGH).

Belongs to the class-I aminoacyl-tRNA synthetase family. As to quaternary structure, monomer.

Its subcellular location is the cytoplasm. The catalysed reaction is tRNA(Arg) + L-arginine + ATP = L-arginyl-tRNA(Arg) + AMP + diphosphate. The protein is Arginine--tRNA ligase of Coxiella burnetii (strain RSA 493 / Nine Mile phase I).